Here is a 544-residue protein sequence, read N- to C-terminus: Lysophosphatidylcholine acyltransferase 2 (544 aa).

Residues 1–58 (MNRCAEAAAVAATVPGSGVGDSGLRPPMVPRQASFFPPPVPNPFVQQTRISAARRLQM) lie on the Cytoplasmic side of the membrane. A helical; Signal-anchor for type II membrane protein membrane pass occupies residues 59 to 79 (ILLGIILLPVRALLVGLVLLL). Topologically, residues 80-544 (AWPFAVISTV…EEGTSGKKVD (465 aa)) are lumenal. Residues 146-151 (HSTFFD) carry the HXXXXD motif motif. The short motif at 220–223 (EGTC) is the EGTC motif element. EF-hand domains lie at 391–426 (PVSD…LCNP) and 428–463 (NTED…SLGV). Ca(2+) is bound by residues D404, N406, D408, S410, E415, D441, D443, D445, Y447, and E452. A compositionally biased stretch (polar residues) spans 520–530 (TAPSVASNKVS). Residues 520–544 (TAPSVASNKVSPESHEEGTSGKKVD) form a disordered region. Residues 531–544 (PESHEEGTSGKKVD) show a composition bias toward basic and acidic residues.

Belongs to the 1-acyl-sn-glycerol-3-phosphate acyltransferase family.

The protein localises to the endoplasmic reticulum membrane. Its subcellular location is the golgi apparatus membrane. The protein resides in the cell membrane. It is found in the lipid droplet. It carries out the reaction a 1-acyl-sn-glycero-3-phosphocholine + an acyl-CoA = a 1,2-diacyl-sn-glycero-3-phosphocholine + CoA. The enzyme catalyses a 1-O-alkyl-sn-glycero-3-phosphocholine + acetyl-CoA = a 1-O-alkyl-2-acetyl-sn-glycero-3-phosphocholine + CoA. It catalyses the reaction a 1-acyl-sn-glycero-3-phosphate + an acyl-CoA = a 1,2-diacyl-sn-glycero-3-phosphate + CoA. The catalysed reaction is a 1-O-(1Z-alkenyl)-sn-glycero-3-phosphocholine + an acyl-CoA = a 1-O-(1Z-alkenyl)-2-acyl-sn-glycero-3-phosphocholine + CoA. It carries out the reaction 1-hexadecanoyl-sn-glycero-3-phosphate + (9Z)-octadecenoyl-CoA = 1-hexadecanoyl-2-(9Z-octadecenoyl)-sn-glycero-3-phosphate + CoA. The enzyme catalyses 1-(9Z-octadecenoyl)-sn-glycero-3-phosphate + (9Z)-octadecenoyl-CoA = 1,2-di-(9Z-octadecenoyl)-sn-glycero-3-phosphate + CoA. It catalyses the reaction 1-(9Z-octadecenoyl)-sn-glycero-3-phosphate + hexadecanoyl-CoA = 1-(9Z)-octadecenoyl-2-hexadecanoyl-sn-glycero-3-phosphate + CoA. The catalysed reaction is 1-heptadecanoyl-sn-glycero-3-phosphate + (9Z)-octadecenoyl-CoA = 1-heptadecanoyl-2-(9Z)-octadecenoyl-sn-glycero-3-phosphate + CoA. It carries out the reaction 1-octadecanoyl-sn-glycero-3-phosphate + (9Z)-octadecenoyl-CoA = 1-octadecanoyl-2-(9Z-octadecenoyl)-sn-glycero-3-phosphate + CoA. The enzyme catalyses heptadecanoyl-CoA + 1-(9Z-octadecenoyl)-sn-glycero-3-phosphate = 1-(9Z)-octadecenoyl-2-heptadecanoyl-sn-glycero-3-phosphate + CoA. It catalyses the reaction 1-(9Z-octadecenoyl)-sn-glycero-3-phosphate + (9Z,12Z)-octadecadienoyl-CoA = 1-(9Z)-octadecenoyl-2-(9Z,12Z)-octadecadienoyl-sn-glycero-3-phosphate + CoA. The catalysed reaction is 1-(9Z-octadecenoyl)-sn-glycero-3-phosphate + tetradecanoyl-CoA = 1-(9Z)-octadecenoyl-2-tetradecanoyl-sn-glycero-3-phosphate + CoA. It carries out the reaction pentadecanoyl-CoA + 1-(9Z-octadecenoyl)-sn-glycero-3-phosphate = 1-(9Z)-octadecenoyl-2-pentadecanoyl-sn-glycero-3-phosphate + CoA. The enzyme catalyses nonadecanoyl-CoA + 1-(9Z-octadecenoyl)-sn-glycero-3-phosphate = 1-(9Z)-octadecenoyl-2-nonadecanoyl-sn-glycero-3-phosphate + CoA. It catalyses the reaction 1-hexadecanoyl-sn-glycero-3-phosphocholine + (9Z)-octadecenoyl-CoA = 1-hexadecanoyl-2-(9Z-octadecenoyl)-sn-glycero-3-phosphocholine + CoA. The catalysed reaction is 1-O-hexadecyl-sn-glycero-3-phosphocholine + acetyl-CoA = 1-O-hexadecyl-2-acetyl-sn-glycero-3-phosphocholine + CoA. It carries out the reaction 1-O-octadecyl-sn-glycero-3-phosphocholine + acetyl-CoA = 1-O-octadecyl-2-acetyl-sn-glycero-3-phosphocholine + CoA. The enzyme catalyses 1-hexadecanoyl-sn-glycero-3-phosphocholine + acetyl-CoA = 1-hexadecanoyl-2-acetyl-sn-glycero-3-phosphocholine + CoA. It catalyses the reaction 1-octadecanoyl-sn-glycero-3-phosphocholine + acetyl-CoA = 1-octadecanoyl-2-acetyl-sn-glycero-3-phosphocholine + CoA. The catalysed reaction is a 1-O-(1Z-alkenyl)-sn-glycero-3-phosphocholine + acetyl-CoA = 1-O-(1Z)-alkenyl-2-acetyl-sn-glycero-3-phosphocholine + CoA. It carries out the reaction 1-O-octadecyl-sn-glycero-3-phosphocholine + (5Z,8Z,11Z,14Z)-eicosatetraenoyl-CoA = 1-O-octadecyl-2-(5Z,8Z,11Z,14Z)-eicosatetraenoyl-sn-glycero-3-phosphocholine + CoA. The protein operates within lipid metabolism; phospholipid metabolism. Functionally, exhibits both acyltransferase and acetyltransferase activities. Activity is calcium-dependent. Catalyzes the conversion of lysophosphatidylcholine (1-acyl-sn-glycero-3-phosphocholine or LPC) into phosphatidylcholine (1,2-diacyl-sn-glycero-3-phosphocholine or PC). Catalyzes the conversion 1-acyl-sn-glycerol-3-phosphate (lysophosphatidic acid or LPA) into 1,2-diacyl-sn-glycerol-3-phosphate (phosphatidic acid or PA) by incorporating an acyl moiety at the sn-2 position of the glycerol backbone. Involved in platelet-activating factor (PAF) biosynthesis by catalyzing the conversion of the PAF precursor, 1-O-alkyl-sn-glycero-3-phosphocholine (lyso-PAF) into 1-O-alkyl-2-acetyl-sn-glycero-3-phosphocholine (PAF). Also converts lyso-PAF to 1-O-alkyl-2-acyl-sn-glycero-3-phosphocholine (PC), a major component of cell membranes and a PAF precursor. Under resting conditions, acyltransferase activity is preferred. Upon acute inflammatory stimulus, acetyltransferase activity is enhanced and PAF synthesis increases. Involved in the regulation of lipid droplet number and size. This Rattus norvegicus (Rat) protein is Lysophosphatidylcholine acyltransferase 2 (Lpcat2).